A 495-amino-acid polypeptide reads, in one-letter code: Galactose-1-phosphate uridylyltransferase (495 aa).

This sequence belongs to the galactose-1-phosphate uridylyltransferase type 2 family.

It localises to the cytoplasm. It carries out the reaction alpha-D-galactose 1-phosphate + UDP-alpha-D-glucose = alpha-D-glucose 1-phosphate + UDP-alpha-D-galactose. Its pathway is carbohydrate metabolism; galactose metabolism. This Ligilactobacillus salivarius (strain UCC118) (Lactobacillus salivarius) protein is Galactose-1-phosphate uridylyltransferase.